A 263-amino-acid polypeptide reads, in one-letter code: 3-methyl-2-oxobutanoate hydroxymethyltransferase (263 aa).

Aspartate 45 and aspartate 84 together coordinate Mg(2+). 3-methyl-2-oxobutanoate contacts are provided by residues 45–46, aspartate 84, and lysine 112; that span reads DS. Mg(2+) is bound at residue glutamate 114. Glutamate 181 acts as the Proton acceptor in catalysis.

The protein belongs to the PanB family. As to quaternary structure, homodecamer; pentamer of dimers. Requires Mg(2+) as cofactor.

It is found in the cytoplasm. The enzyme catalyses 3-methyl-2-oxobutanoate + (6R)-5,10-methylene-5,6,7,8-tetrahydrofolate + H2O = 2-dehydropantoate + (6S)-5,6,7,8-tetrahydrofolate. It participates in cofactor biosynthesis; (R)-pantothenate biosynthesis; (R)-pantoate from 3-methyl-2-oxobutanoate: step 1/2. Its function is as follows. Catalyzes the reversible reaction in which hydroxymethyl group from 5,10-methylenetetrahydrofolate is transferred onto alpha-ketoisovalerate to form ketopantoate. This is 3-methyl-2-oxobutanoate hydroxymethyltransferase from Buchnera aphidicola subsp. Schizaphis graminum (strain Sg).